Reading from the N-terminus, the 97-residue chain is Large ribosomal subunit protein uL23 (97 aa).

The protein belongs to the universal ribosomal protein uL23 family. Part of the 50S ribosomal subunit. Contacts protein L29, and trigger factor when it is bound to the ribosome.

Functionally, one of the early assembly proteins it binds 23S rRNA. One of the proteins that surrounds the polypeptide exit tunnel on the outside of the ribosome. Forms the main docking site for trigger factor binding to the ribosome. This chain is Large ribosomal subunit protein uL23, found in Brucella melitensis biotype 2 (strain ATCC 23457).